A 131-amino-acid chain; its full sequence is Antileukoproteinase (131 aa).

Positions 1-25 (MKSCGLLPFTVLLALGILAPWTVEG) are cleaved as a signal peptide. 2 WAP domains span residues 29 to 77 (DAIK…VNPV) and 83 to 131 (VWRK…LPPM). 8 disulfide bridges follow: Cys36–Cys65, Cys44–Cys69, Cys52–Cys64, Cys58–Cys73, Cys90–Cys119, Cys97–Cys123, Cys106–Cys118, and Cys112–Cys127. Residues 85–131 (RKPGRCVKTQARCMMLNPPNVCQRDGQCDGKYKCCEGICGKVCLPPM) form an elastase inhibitory domain region.

In terms of assembly, interacts with GRN; interaction protects progranulin from proteolysis. Detected in bronchial epithelial cells. Detected in bronchoalveolar fluid after infection with M.tuberculosis (at protein level). Highest expression in lung, spleen, intestine and epididymis with lower levels in liver and seminal vesicle. No expression in brain, heart, kidney and muscle.

The protein localises to the secreted. Functionally, acid-stable proteinase inhibitor with strong affinities for trypsin, chymotrypsin, elastase, and cathepsin G. Modulates the innate immune response after bacterial infection. Contributes to regulate the inflammatory and immune responses to the intracellular parasite L.major. Down-regulates responses to bacterial lipopolysaccharide (LPS). Plays a role in regulating the activation of NF-kappa-B and inflammatory responses. Has antimicrobial activity against mycobacteria, but not against salmonella. Contributes to normal resistance against infection by M.tuberculosis. Required for normal resistance to L.major. Required for normal wound healing, probably by preventing tissue damage by limiting protease activity. Together with ELANE, required for normal differentiation and proliferation of bone marrow myeloid cells. This Mus musculus (Mouse) protein is Antileukoproteinase (Slpi).